A 233-amino-acid polypeptide reads, in one-letter code: UPF0280 protein AF_0649 (233 aa).

The protein belongs to the UPF0280 family.

The protein is UPF0280 protein AF_0649 of Archaeoglobus fulgidus (strain ATCC 49558 / DSM 4304 / JCM 9628 / NBRC 100126 / VC-16).